The sequence spans 240 residues: 3-dehydroquinate dehydratase (240 aa).

3-dehydroquinate-binding positions include Ser15, Glu42–Arg44, and Arg73. The Proton donor/acceptor role is filled by His132. The active-site Schiff-base intermediate with substrate is the Lys160. The 3-dehydroquinate site is built by Arg202, Ser221, and Gln225.

The protein belongs to the type-I 3-dehydroquinase family. As to quaternary structure, homodimer.

The enzyme catalyses 3-dehydroquinate = 3-dehydroshikimate + H2O. It participates in metabolic intermediate biosynthesis; chorismate biosynthesis; chorismate from D-erythrose 4-phosphate and phosphoenolpyruvate: step 3/7. Involved in the third step of the chorismate pathway, which leads to the biosynthesis of aromatic amino acids. Catalyzes the cis-dehydration of 3-dehydroquinate (DHQ) and introduces the first double bond of the aromatic ring to yield 3-dehydroshikimate. The protein is 3-dehydroquinate dehydratase of Latilactobacillus sakei subsp. sakei (strain 23K) (Lactobacillus sakei subsp. sakei).